Consider the following 371-residue polypeptide: F-box protein At2g41170 (371 aa).

In terms of domain architecture, F-box spans 56 to 102 (KMSLLDLPDLTLDCILEKLSPSELCAMTSVCSELRDKCVSDHLWEKH).

This Arabidopsis thaliana (Mouse-ear cress) protein is F-box protein At2g41170.